The chain runs to 360 residues: Outer membrane protein P2 (360 aa).

The signal sequence occupies residues 1-20 (MKKTLAALIVGAFAASAANA).

It belongs to the Gram-negative porin family. Homotrimer.

It is found in the cell outer membrane. Functionally, forms pores that allow passive diffusion of small molecules across the outer membrane. The chain is Outer membrane protein P2 (ompP2) from Haemophilus influenzae.